Here is a 240-residue protein sequence, read N- to C-terminus: Biosynthetic peptidoglycan transglycosylase (240 aa).

A helical transmembrane segment spans residues 15 to 35 (WMFYLGAVVAIAWLATQAFYF).

The protein belongs to the glycosyltransferase 51 family.

Its subcellular location is the cell inner membrane. It catalyses the reaction [GlcNAc-(1-&gt;4)-Mur2Ac(oyl-L-Ala-gamma-D-Glu-L-Lys-D-Ala-D-Ala)](n)-di-trans,octa-cis-undecaprenyl diphosphate + beta-D-GlcNAc-(1-&gt;4)-Mur2Ac(oyl-L-Ala-gamma-D-Glu-L-Lys-D-Ala-D-Ala)-di-trans,octa-cis-undecaprenyl diphosphate = [GlcNAc-(1-&gt;4)-Mur2Ac(oyl-L-Ala-gamma-D-Glu-L-Lys-D-Ala-D-Ala)](n+1)-di-trans,octa-cis-undecaprenyl diphosphate + di-trans,octa-cis-undecaprenyl diphosphate + H(+). Its pathway is cell wall biogenesis; peptidoglycan biosynthesis. In terms of biological role, peptidoglycan polymerase that catalyzes glycan chain elongation from lipid-linked precursors. This Paraburkholderia xenovorans (strain LB400) protein is Biosynthetic peptidoglycan transglycosylase.